Consider the following 123-residue polypeptide: N(4)-acetylcytidine amidohydrolase (123 aa).

Residues 6 to 101 (ITFYQRFEAD…EIIFWVIQFS (96 aa)) enclose the ASCH domain. The Proton acceptor role is filled by Lys21. The active-site Nucleophile is the Ser24. Catalysis depends on Glu74, which acts as the Proton donor.

The protein belongs to the N(4)-acetylcytidine amidohydrolase family.

The catalysed reaction is N(4)-acetylcytidine + H2O = cytidine + acetate + H(+). It catalyses the reaction N(4)-acetyl-2'-deoxycytidine + H2O = 2'-deoxycytidine + acetate + H(+). The enzyme catalyses N(4)-acetylcytosine + H2O = cytosine + acetate + H(+). In terms of biological role, catalyzes the hydrolysis of N(4)-acetylcytidine (ac4C). The polypeptide is N(4)-acetylcytidine amidohydrolase (Haemophilus influenzae (strain ATCC 51907 / DSM 11121 / KW20 / Rd)).